We begin with the raw amino-acid sequence, 381 residues long: Neuropeptide Y receptor type 2 (381 aa).

The disordered stretch occupies residues 1–37 (MGPIGTEADENQTVEEIKVEPYGPGHTTPRGELAPDP). The Extracellular portion of the chain corresponds to 1–52 (MGPIGTEADENQTVEEIKVEPYGPGHTTPRGELAPDPEPELIDSTKLTEVRV). Asn-11 carries N-linked (GlcNAc...) asparagine glycosylation. The chain crosses the membrane as a helical span at residues 53–73 (VLILAYCSIILLGVVGNSLVI). Residues 74–87 (HVVIKFKSMRTVTN) lie on the Cytoplasmic side of the membrane. A helical transmembrane segment spans residues 88-108 (FFIANLAVADLLVNTLCLPFT). Topologically, residues 109–125 (LTYTLMGEWKMGPVLCH) are extracellular. Residues Cys-124 and Cys-204 are joined by a disulfide bond. A helical transmembrane segment spans residues 126 to 146 (LVPYAQGLAVQVSTVTLTVIA). At 147 to 166 (LDRHRCIVYHLDSKISKQNS) the chain is on the cytoplasmic side. Residues 167-187 (FLIIGLAWGISALLASPLAIF) traverse the membrane as a helical segment. Over 188-217 (REYSLIEIIPDFEIVACTEKWPGEEKSIYG) the chain is Extracellular. Residues 218 to 238 (TVYSLSSLLILYVLPLGIISV) form a helical membrane-spanning segment. Over 239-269 (SYVRIWSKLKNHVSPGAANDHYHQRRQKTTK) the chain is Cytoplasmic. Residues 270–290 (MLVFVVVVFAVSWLPLHAFQL) form a helical membrane-spanning segment. Topologically, residues 291–305 (AVDIDSQVLDLKEYK) are extracellular. The helical transmembrane segment at 306–326 (LIFTVFHIIAMCSTFANPLLY) threads the bilayer. Over 327–381 (GWMNSNYRKAFLSAFRCQQRLDAIQSEVCVTGKAKTNVEVEKNHGAADSAEATNV) the chain is Cytoplasmic. A lipid anchor (S-palmitoyl cysteine) is attached at Cys-343.

Belongs to the G-protein coupled receptor 1 family.

It is found in the cell membrane. Its function is as follows. Receptor for neuropeptide Y and peptide YY. The sequence is that of Neuropeptide Y receptor type 2 (NPY2R) from Cavia porcellus (Guinea pig).